The following is a 388-amino-acid chain: Protochlorophyllide reductase A, chloroplastic (388 aa).

The N-terminal 74 residues, 1–74 (MALQLLPSTL…KPSGKKTLRQ (74 aa)), are a transit peptide targeting the chloroplast.

The protein belongs to the short-chain dehydrogenases/reductases (SDR) family. POR subfamily.

It localises to the plastid. The protein localises to the chloroplast. It catalyses the reaction chlorophyllide a + NADP(+) = protochlorophyllide a + NADPH + H(+). Its pathway is porphyrin-containing compound metabolism; chlorophyll biosynthesis. Functionally, phototransformation of protochlorophyllide (Pchlide) to chlorophyllide (Chlide). This is Protochlorophyllide reductase A, chloroplastic (PORA) from Triticum aestivum (Wheat).